Reading from the N-terminus, the 461-residue chain is D-phenylhydantoinase (461 aa).

His59, His61, and Lys151 together coordinate a divalent metal cation. Lys151 bears the N6-carboxylysine mark. A substrate-binding site is contributed by Tyr156. A divalent metal cation is bound by residues His182 and His239. Ser286 contributes to the substrate binding site. Asp313 provides a ligand contact to a divalent metal cation. Residue Asn335 participates in substrate binding.

The protein belongs to the metallo-dependent hydrolases superfamily. Hydantoinase/dihydropyrimidinase family. Homotetramer. It depends on a divalent metal cation as a cofactor. Post-translationally, carboxylation allows a single lysine to coordinate two divalent metal cations.

It carries out the reaction D-5-phenylhydantoin + H2O = N-carbamoyl-D-phenylglycine + H(+). Catalyzes the stereospecific hydrolysis of the cyclic amide bond of D-hydantoin derivatives with an aromatic side chains at the 5'-position. Has no activity on dihydropyrimidines. The physiological function is unknown. In Escherichia coli O7:K1 (strain IAI39 / ExPEC), this protein is D-phenylhydantoinase.